Here is a 446-residue protein sequence, read N- to C-terminus: MSVIVSDRRTLIVGLGKTGLSCVRYLSGQGREIAVADSRLQPPGLDELKAGWPDVPVYLGDFDEALFAGFNELVVSPGISIAEPAIAGAAARGARIRGDIDLFADAADAPIIAITGSNGKTTVTTLVGEMARAAGRNVQVGGNIGTPALDLLEQGADLYVLELSSFQLETTEELGALAATVLNVSDDHMDRYPDKMAYFQAKQRIYRGCKNAIVNLDDALSTPMARDTLRFLCFGFNRVNPETFSTRDDDEGTWITWGLENLLLASELQLMGRHNISNVMAALALGYAAGLAMEPMLEVARRFRGLPHRCESVRNLDGVDYINDSKGTNVGATVAAIESLVPESGKVILIAGGDGKGADFQPLAEPVAACCRALVLIGRDAGKISRAVGASVPQHRATSLQEAVSLARQAAEPGDRVLLSPACASFDMFRDYNDRGEQFRTLVEGL.

116-122 (GSNGKTT) lines the ATP pocket.

Belongs to the MurCDEF family.

Its subcellular location is the cytoplasm. It carries out the reaction UDP-N-acetyl-alpha-D-muramoyl-L-alanine + D-glutamate + ATP = UDP-N-acetyl-alpha-D-muramoyl-L-alanyl-D-glutamate + ADP + phosphate + H(+). Its pathway is cell wall biogenesis; peptidoglycan biosynthesis. Functionally, cell wall formation. Catalyzes the addition of glutamate to the nucleotide precursor UDP-N-acetylmuramoyl-L-alanine (UMA). The sequence is that of UDP-N-acetylmuramoylalanine--D-glutamate ligase from Marinobacter nauticus (strain ATCC 700491 / DSM 11845 / VT8) (Marinobacter aquaeolei).